A 420-amino-acid chain; its full sequence is MLKRSMNIADYDPVLWQAIQDENRRQEEHIELIASENYASPRVMEAQGSQFTNKYAEGYPGKRYYGGCEYADIVEQLAIDRAKELFHADYVNVQPHSGSQANAAVYGALLQPHDTILGMSLAHGGHLTHGASVSFSGKIYNAVQYGITAEGLIDYEDVRQKALECKPKMIVAGFSAYSQVVDWAKMREIADEVGAYLFVDMAHVAGLIAAGVYPSPLPHAHVVTTTTHKTLGGPRGGLILSAAKDEDLYKKLQSSVFPANQGGPLVHVIAAKAVCFKEALEPEYKVYQQQVVKNAKAMVDVFKQRGYNVVSNGTENHLFLVDLVSHGLTGKAADAALGSANITVNKNAVPNDPQKPFVTSGIRVGTPSITRRGFKEAESAELAGWMCDVLDAMGKDNEAQVIAQTKEKVLAICKRLPVYA.

(6S)-5,6,7,8-tetrahydrofolate contacts are provided by residues Leu-121 and 125–127; that span reads GHL. An N6-(pyridoxal phosphate)lysine modification is found at Lys-229.

This sequence belongs to the SHMT family. In terms of assembly, homodimer. Requires pyridoxal 5'-phosphate as cofactor.

The protein localises to the cytoplasm. It carries out the reaction (6R)-5,10-methylene-5,6,7,8-tetrahydrofolate + glycine + H2O = (6S)-5,6,7,8-tetrahydrofolate + L-serine. It functions in the pathway one-carbon metabolism; tetrahydrofolate interconversion. Its pathway is amino-acid biosynthesis; glycine biosynthesis; glycine from L-serine: step 1/1. Functionally, catalyzes the reversible interconversion of serine and glycine with tetrahydrofolate (THF) serving as the one-carbon carrier. This reaction serves as the major source of one-carbon groups required for the biosynthesis of purines, thymidylate, methionine, and other important biomolecules. Also exhibits THF-independent aldolase activity toward beta-hydroxyamino acids, producing glycine and aldehydes, via a retro-aldol mechanism. This Pasteurella multocida (strain Pm70) protein is Serine hydroxymethyltransferase.